The sequence spans 361 residues: Phospho-N-acetylmuramoyl-pentapeptide-transferase (361 aa).

Transmembrane regions (helical) follow at residues 26–46, 73–93, 98–118, 139–159, 168–188, 200–220, 237–257, 264–284, 289–309, and 339–359; these read SILA…VLIQ, TMGG…WGDL, VWLV…DDWI, IFGL…AAVT, IALP…IVGF, GLAI…AYAS, AGDL…FLWF, VFMG…IAVI, LVLV…IIQV, and VIVR…ATLK.

The protein belongs to the glycosyltransferase 4 family. MraY subfamily. Mg(2+) is required as a cofactor.

The protein localises to the cell inner membrane. The catalysed reaction is UDP-N-acetyl-alpha-D-muramoyl-L-alanyl-gamma-D-glutamyl-meso-2,6-diaminopimeloyl-D-alanyl-D-alanine + di-trans,octa-cis-undecaprenyl phosphate = di-trans,octa-cis-undecaprenyl diphospho-N-acetyl-alpha-D-muramoyl-L-alanyl-D-glutamyl-meso-2,6-diaminopimeloyl-D-alanyl-D-alanine + UMP. It functions in the pathway cell wall biogenesis; peptidoglycan biosynthesis. Catalyzes the initial step of the lipid cycle reactions in the biosynthesis of the cell wall peptidoglycan: transfers peptidoglycan precursor phospho-MurNAc-pentapeptide from UDP-MurNAc-pentapeptide onto the lipid carrier undecaprenyl phosphate, yielding undecaprenyl-pyrophosphoryl-MurNAc-pentapeptide, known as lipid I. This Xylella fastidiosa (strain 9a5c) protein is Phospho-N-acetylmuramoyl-pentapeptide-transferase.